Consider the following 238-residue polypeptide: Uridylate kinase (238 aa).

Residue K12–G15 coordinates ATP. G54 contacts UMP. ATP is bound by residues G55 and R59. UMP-binding positions include D74 and T135 to T142. The ATP site is built by T162, N163, Y168, and D171.

It belongs to the UMP kinase family. Homohexamer.

It localises to the cytoplasm. It carries out the reaction UMP + ATP = UDP + ADP. It functions in the pathway pyrimidine metabolism; CTP biosynthesis via de novo pathway; UDP from UMP (UMPK route): step 1/1. With respect to regulation, inhibited by UTP. In terms of biological role, catalyzes the reversible phosphorylation of UMP to UDP. The chain is Uridylate kinase from Nitrobacter winogradskyi (strain ATCC 25391 / DSM 10237 / CIP 104748 / NCIMB 11846 / Nb-255).